A 138-amino-acid chain; its full sequence is Large ribosomal subunit protein uL14 (138 aa).

It belongs to the universal ribosomal protein uL14 family. Part of the 50S ribosomal subunit. Forms a cluster with proteins L3 and L24e, part of which may contact the 16S rRNA in 2 intersubunit bridges.

Functionally, binds to 23S rRNA. Forms part of two intersubunit bridges in the 70S ribosome. This is Large ribosomal subunit protein uL14 from Hyperthermus butylicus (strain DSM 5456 / JCM 9403 / PLM1-5).